The primary structure comprises 32 residues: Corticostatin-related peptide RK-1 (32 aa).

3 cysteine pairs are disulfide-bonded: Cys3–Cys29, Cys5–Cys19, and Cys9–Cys28.

Its subcellular location is the secreted. Has antimicrobial activity against E.coli and activates ion channel activity. The polypeptide is Corticostatin-related peptide RK-1 (Oryctolagus cuniculus (Rabbit)).